The sequence spans 202 residues: Superoxide dismutase [Fe] (202 aa).

Residues histidine 27, histidine 82, aspartate 164, and histidine 168 each contribute to the Fe cation site.

Belongs to the iron/manganese superoxide dismutase family. Homodimer. It depends on Fe cation as a cofactor.

It carries out the reaction 2 superoxide + 2 H(+) = H2O2 + O2. Functionally, destroys superoxide anion radicals which are normally produced within the cells and which are toxic to biological systems. The sequence is that of Superoxide dismutase [Fe] (sodA) from Enterococcus faecalis (strain ATCC 700802 / V583).